The sequence spans 142 residues: Galactose-6-phosphate isomerase subunit LacA (142 aa).

Belongs to the LacAB/RpiB family. Heteromultimeric protein consisting of LacA and LacB.

The catalysed reaction is aldehydo-D-galactose 6-phosphate = keto-D-tagatose 6-phosphate. It participates in carbohydrate metabolism; D-galactose 6-phosphate degradation; D-tagatose 6-phosphate from D-galactose 6-phosphate: step 1/1. This chain is Galactose-6-phosphate isomerase subunit LacA, found in Staphylococcus epidermidis (strain ATCC 35984 / DSM 28319 / BCRC 17069 / CCUG 31568 / BM 3577 / RP62A).